The chain runs to 296 residues: Polyadenylate-binding protein 2 (296 aa).

The interval 1 to 102 (MAAVSSAASL…EEEPGELTGD (102 aa)) is disordered. Gly residues-rich tracts occupy residues 19–31 (LRGG…GGQD) and 71–82 (GRGGSGGGGAGG). Residues 84 to 97 (EELEDEELEEEEPG) are compositionally biased toward acidic residues. Residues 107–141 (DPELEAIKARVREMEEEAEKLKELQNEVEKQMNMS) are a coiled coil. The tract at residues 146 to 296 (NAGPVIMSIE…ARVTSWYTPY (151 aa)) is necessary for homooligomerization. An RRM domain is found at 163 to 240 (RSIYVGNVDY…RQIKVVPKRT (78 aa)).

As to quaternary structure, monomer and homooligomer. Binds RNA as a monomer and oligomerizes when bound to poly(A).

It localises to the nucleus. The protein resides in the cytoplasm. Its function is as follows. Involved in the 3'-end formation of mRNA precursors (pre-mRNA) by the addition of a poly(A) tail of 200-250 nt to the upstream cleavage product. Stimulates poly(A) polymerase (PAPOLA) conferring processivity on the poly(A) tail elongation reaction and also controls the poly(A) tail length. Increases the affinity of poly(A) polymerase for RNA. Binds to poly(A) and to poly(G) with high affinity. May protect the poly(A) tail from degradation. This chain is Polyadenylate-binding protein 2, found in Xenopus tropicalis (Western clawed frog).